We begin with the raw amino-acid sequence, 200 residues long: 3-isopropylmalate dehydratase small subunit (200 aa).

Belongs to the LeuD family. LeuD type 1 subfamily. As to quaternary structure, heterodimer of LeuC and LeuD.

It carries out the reaction (2R,3S)-3-isopropylmalate = (2S)-2-isopropylmalate. Its pathway is amino-acid biosynthesis; L-leucine biosynthesis; L-leucine from 3-methyl-2-oxobutanoate: step 2/4. Its function is as follows. Catalyzes the isomerization between 2-isopropylmalate and 3-isopropylmalate, via the formation of 2-isopropylmaleate. The protein is 3-isopropylmalate dehydratase small subunit of Actinobacillus pleuropneumoniae serotype 5b (strain L20).